A 469-amino-acid chain; its full sequence is UDP-N-acetylmuramate--L-alanine ligase (469 aa).

113 to 119 provides a ligand contact to ATP; the sequence is GTHGKTT.

This sequence belongs to the MurCDEF family.

It is found in the cytoplasm. It carries out the reaction UDP-N-acetyl-alpha-D-muramate + L-alanine + ATP = UDP-N-acetyl-alpha-D-muramoyl-L-alanine + ADP + phosphate + H(+). It functions in the pathway cell wall biogenesis; peptidoglycan biosynthesis. In terms of biological role, cell wall formation. The protein is UDP-N-acetylmuramate--L-alanine ligase of Neisseria gonorrhoeae (strain ATCC 700825 / FA 1090).